Consider the following 189-residue polypeptide: UPF0149 protein VSAL_I2539 (189 aa).

It belongs to the UPF0149 family.

This Aliivibrio salmonicida (strain LFI1238) (Vibrio salmonicida (strain LFI1238)) protein is UPF0149 protein VSAL_I2539.